The chain runs to 348 residues: NADH-quinone oxidoreductase subunit H (348 aa).

8 helical membrane passes run 10–30 (LPFLIIVGKTLLLLVVLLVLV), 82–102 (GVFLLAPFVSATLALSTWAVI), 115–135 (VGLLYILAISSLEVYGVIMGG), 161–181 (IGFVLVTVILISGSLDLTTIV), 199–219 (FLDWNWLVLFPMFIIFFISAL), 251–271 (LFFLGEYVAIVLMCALTTILF), 287–307 (IPGVIWFVLKVCFVFFWFAIV), and 322–342 (LGWKVFLPLSLAMVVITAAFL).

Belongs to the complex I subunit 1 family. NDH-1 is composed of 14 different subunits. Subunits NuoA, H, J, K, L, M, N constitute the membrane sector of the complex.

It is found in the cell inner membrane. The enzyme catalyses a quinone + NADH + 5 H(+)(in) = a quinol + NAD(+) + 4 H(+)(out). Functionally, NDH-1 shuttles electrons from NADH, via FMN and iron-sulfur (Fe-S) centers, to quinones in the respiratory chain. The immediate electron acceptor for the enzyme in this species is believed to be ubiquinone. Couples the redox reaction to proton translocation (for every two electrons transferred, four hydrogen ions are translocated across the cytoplasmic membrane), and thus conserves the redox energy in a proton gradient. This subunit may bind ubiquinone. This is NADH-quinone oxidoreductase subunit H from Bartonella tribocorum (strain CIP 105476 / IBS 506).